Here is a 72-residue protein sequence, read N- to C-terminus: Translation initiation factor IF-1 (72 aa).

Residues 1–72 (MAKEDNFELE…SKGRITYRAR (72 aa)) enclose the S1-like domain.

Belongs to the IF-1 family. As to quaternary structure, component of the 30S ribosomal translation pre-initiation complex which assembles on the 30S ribosome in the order IF-2 and IF-3, IF-1 and N-formylmethionyl-tRNA(fMet); mRNA recruitment can occur at any time during PIC assembly.

The protein resides in the cytoplasm. Functionally, one of the essential components for the initiation of protein synthesis. Stabilizes the binding of IF-2 and IF-3 on the 30S subunit to which N-formylmethionyl-tRNA(fMet) subsequently binds. Helps modulate mRNA selection, yielding the 30S pre-initiation complex (PIC). Upon addition of the 50S ribosomal subunit IF-1, IF-2 and IF-3 are released leaving the mature 70S translation initiation complex. The sequence is that of Translation initiation factor IF-1 from Saccharophagus degradans (strain 2-40 / ATCC 43961 / DSM 17024).